A 167-amino-acid chain; its full sequence is Protein FAM163B (167 aa).

The chain crosses the membrane as a helical span at residues 6 to 26; that stretch reads VVITGGILATVILLCIIAVLC. At Ser40 the chain carries Phosphoserine.

The protein belongs to the FAM163 family.

Its subcellular location is the membrane. This Mus musculus (Mouse) protein is Protein FAM163B (Fam163b).